The sequence spans 720 residues: MNHQNLLVELFVEELPPKALQKLGDAFAGVLLEQLQAQGLTSAHSQLTAFASPRRLAAHITEVLPAAADKAVSQKLMPVAVGLDASGQPTPALLKKLAALGADAASVPQLKRVHDGKAEVLFFESMAKGALLADGLQKALDEAIAKLPIPKVMRYQLQDGWTSVHFVRPAHGLVALHGSEVLVGVQALGLTAGNTTHGHRFEASVDPVVIQSADSYAEQLRSEGAVIASFAERRAEIARQLQAAADRVGGGVRPIDDDALLDEVTALVERPNVLVCEFEKDFLAVPQECLILTMKANQKYFPLLDAEGKLTHQFLVVSNISPQDASAVIQGNERVVRPRLADAKFFFDQDRKKTLVSRVDQLAKVVYHNKLGTQGERVERVRHIAKAIATQLFTALAQGNAALDSQEGEIAQDYLLTCVDNAALLAKTDLVTDMVGEFPELQGIMGGYYAVSDGLPDEVAHAIEDHYKPRFAGDALPRENVGVVVALADKLETLVGMFGIGNLPTGDRDPFALRRHALGVIRMLVEKELPLDLDALLASAVPAFGDKIEDTSAQLADFIYDRLAGSLREQGYSAQEVDAVIALRPQRLALVPRQIEAVRAFATLEQAPALAAANKRVTNILKKAGEVDPHVNEELLQEPAEKDLYAALQRFVPEANAQFDSGDYTASLQTLAVLRAPVDAFFDDVMVNAEELALRLNRQGLLKKLHMAMNRVADLSRLAV.

This sequence belongs to the class-II aminoacyl-tRNA synthetase family. Tetramer of two alpha and two beta subunits.

The protein localises to the cytoplasm. The enzyme catalyses tRNA(Gly) + glycine + ATP = glycyl-tRNA(Gly) + AMP + diphosphate. The chain is Glycine--tRNA ligase beta subunit from Acidovorax ebreus (strain TPSY) (Diaphorobacter sp. (strain TPSY)).